The chain runs to 153 residues: 3-hydroxyacyl-[acyl-carrier-protein] dehydratase FabZ (153 aa).

Residue histidine 57 is part of the active site.

It belongs to the thioester dehydratase family. FabZ subfamily.

The protein localises to the cytoplasm. The enzyme catalyses a (3R)-hydroxyacyl-[ACP] = a (2E)-enoyl-[ACP] + H2O. Its function is as follows. Involved in unsaturated fatty acids biosynthesis. Catalyzes the dehydration of short chain beta-hydroxyacyl-ACPs and long chain saturated and unsaturated beta-hydroxyacyl-ACPs. The sequence is that of 3-hydroxyacyl-[acyl-carrier-protein] dehydratase FabZ from Xanthomonas campestris pv. campestris (strain 8004).